A 332-amino-acid chain; its full sequence is Trace amine-associated receptor 1 (332 aa).

The Extracellular segment spans residues 1–23 (MHLCHAITNISHRNSDWSREVQA). Residue N9 is glycosylated (N-linked (GlcNAc...) asparagine). Residues 24–48 (SLYSLMSLIILATLVGNLIVIISIS) traverse the membrane as a helical segment. Over 49 to 58 (HFKQLHTPTN) the chain is Cytoplasmic. The chain crosses the membrane as a helical span at residues 59-80 (WLLHSMAIVDFLLGCLIMPCSM). Over 81-95 (VRTVERCWYFGEILC) the chain is Extracellular. Residues C95 and C181 are joined by a disulfide bond. A helical transmembrane segment spans residues 96–118 (KVHTSTDIMLSSASIFHLAFISI). 2-phenylethylamine is bound at residue D102. Residues 119-138 (DRYCAVCDPLRYKAKINIST) lie on the Cytoplasmic side of the membrane. The chain crosses the membrane as a helical span at residues 139–160 (ILVMILVSWSLPAVYAFGMIFL). The Extracellular portion of the chain corresponds to 161-187 (ELNLKGVEELYRSQVSDLGGCSPFFSK). An extracellular Loop 2 (ECL2) region spans residues 174-185 (QVSDLGGCSPFF). A helical membrane pass occupies residues 188–210 (VSGVLAFMTSFYIPGSVMLFVYY). The Cytoplasmic segment spans residues 211-246 (RIYFIAKGQARSINRTNVQVGLEGKSQAPQSKETKA). Residues 247-270 (AKTLGIMVGVFLVCWCPFFLCTVL) traverse the membrane as a helical segment. Over 271 to 283 (DPFLGYVIPPSLN) the chain is Extracellular. The helical transmembrane segment at 284–304 (DALYWFGYLNSALNPMVYAFF) threads the bilayer. The Cytoplasmic segment spans residues 305-332 (YPWFRRALKMVLLGKIFQKDSSRSKLFL).

This sequence belongs to the G-protein coupled receptor 1 family. In terms of tissue distribution, widely distributed throughout the brain. Strongly expressed in the mitral cell layer of the olfactory bulb, piriform cortex, the arcuate, motor, and mesencephalic trigeminal nuclei, lateral reticular and hypoglossal nuclei, cerebellar Purkinje cells, and ventral horn of the spinal cord. Moderately expressed in the frontal, entorhinal, and agranular cortices, the ventral pallidum, thalamus, hippocampus, several hypothalamic nuclei, ambiguus, dorsal raphe, and gigantocellular reticular nuclei. Weakly expressed in the septum, basal ganglia, amygdala, myelencephalon, and spinal cord dorsal horn. Particularly interesting is the moderate expression in several monoaminergic cell groups, namely the dorsal raphe, the locus coeruleus, and the ventral tegmental area.

It is found in the endomembrane system. The protein localises to the endoplasmic reticulum membrane. The protein resides in the cell membrane. With respect to regulation, activated by SEP-363856 small molecule: IHCH-7179 acts both as an agonist activator for HTR1A and TAAR1. In terms of biological role, intracellular G-protein coupled receptor for trace amines, which recognizes endogenous amine-containing metabolites such as beta-phenylethylamine (beta-PEA), 3-iodothyronamine (T1AM), isoamylamine (IAA), cadaverine (CAD), cyclohexylamine (CHA), p-tyramine (p-TYR), trimethylamine (TMA), octopamine and tryptamine. Also functions as a receptor for various drugs and psychoactive substances, such as amphetamine and methamphetamine. Unresponsive to classical biogenic amines, such as epinephrine and histamine and only partially activated by dopamine and serotonin. Expressed in both the central and peripheral nervous system: TAAR1 activation regulates the activity of several neurotransmitter signaling pathways by (1) decreasing the basal firing rates of the neurons involved and by (2) lowering the sensitivity of receptors to neurotransmitters. Ligand binding causes a conformation change that triggers signaling via guanine nucleotide-binding proteins (G proteins) and modulates the activity of downstream effectors. TAAR1 is coupled with different G(i)/G(o)-, G(s)- or G(q)/G(11) classes of G alpha proteins depending on the ligand. CAD-binding is coupled to G(i)/G(o) G alpha proteins and mediates inhibition of adenylate cyclase activity. T1AM- or beta-PEA-binding is coupled to G(s) G alpha proteins and mediates activation of adenylate cyclase activity. CHA- or IAA-binding is coupled to G(q)/G(11) G alpha proteins and activates phospholipase C-beta, releasing diacylglycerol (DAG) and inositol 1,4,5-trisphosphate (IP3) second messengers. TMA-binding is coupled with all three G(i)/G(o)-, G(s)- or G(q)/G(11) G alpha protein subtypes. The sequence is that of Trace amine-associated receptor 1 from Mus musculus (Mouse).